The sequence spans 397 residues: DNA-directed RNA polymerase subunit Rpo1C (397 aa).

It belongs to the RNA polymerase beta' chain family. As to quaternary structure, part of the RNA polymerase complex.

The protein resides in the cytoplasm. The catalysed reaction is RNA(n) + a ribonucleoside 5'-triphosphate = RNA(n+1) + diphosphate. Its function is as follows. DNA-dependent RNA polymerase (RNAP) catalyzes the transcription of DNA into RNA using the four ribonucleoside triphosphates as substrates. Forms part of the jaw domain. This chain is DNA-directed RNA polymerase subunit Rpo1C, found in Pyrococcus horikoshii (strain ATCC 700860 / DSM 12428 / JCM 9974 / NBRC 100139 / OT-3).